A 365-amino-acid polypeptide reads, in one-letter code: Spore germination protein A2 (365 aa).

Transmembrane regions (helical) follow at residues 12 to 32, 45 to 65, 85 to 105, 122 to 142, 148 to 168, 187 to 207, 223 to 243, 250 to 270, 275 to 295, 303 to 323, and 338 to 358; these read TFQG…LTLP, WITL…NTLI, WIGS…ASFE, PIQV…VGGL, LFPF…GISF, IANS…MLFL, LGFL…VGAL, TLIW…IFIE, FLLV…GYFA, FGLS…YFSL, and LGYI…IVAL.

The protein belongs to the amino acid-polyamine-organocation (APC) superfamily. Spore germination protein (SGP) (TC 2.A.3.9) family.

The protein resides in the cell membrane. In terms of biological role, involved in the germinative response to L-alanine. Could be an amino acid transporter. Forms a complex at the inner spore membrane which acts as a receptor for L-alanine, thus is involved in the stimulation of germination in response to alanine. Can stimulate germination in the absence of gerD and gerK gene products (fructose and glucose receptors, respectively), but the response is improved in their presence. This chain is Spore germination protein A2 (gerAB), found in Bacillus subtilis (strain 168).